Here is a 177-residue protein sequence, read N- to C-terminus: Nucleoside triphosphate/diphosphate phosphatase (177 aa).

The active-site Proton donor is arginine 23. Asparagine 87, aspartate 103, aspartate 105, aspartate 107, aspartate 120, and glutamate 123 together coordinate Mg(2+).

The protein belongs to the Ntdp family. Requires Mg(2+) as cofactor.

The enzyme catalyses a ribonucleoside 5'-triphosphate + H2O = a ribonucleoside 5'-diphosphate + phosphate + H(+). The catalysed reaction is a ribonucleoside 5'-diphosphate + H2O = a ribonucleoside 5'-phosphate + phosphate + H(+). Its function is as follows. Has nucleoside phosphatase activity towards nucleoside triphosphates and nucleoside diphosphates. The sequence is that of Nucleoside triphosphate/diphosphate phosphatase from Streptococcus sanguinis (strain SK36).